The chain runs to 125 residues: U-scoloptoxin(05)-Sm1a (125 aa).

The signal sequence occupies residues 1 to 20; it reads MNVLYTKIFFILILTRTSSA.

The protein belongs to the scoloptoxin-05 family. Contains 4 disulfide bonds. In terms of tissue distribution, expressed by the venom gland.

It localises to the secreted. The polypeptide is U-scoloptoxin(05)-Sm1a (Scolopendra morsitans (Tanzanian blue ringleg centipede)).